Reading from the N-terminus, the 131-residue chain is Small ribosomal subunit protein bS6 (131 aa).

Belongs to the bacterial ribosomal protein bS6 family.

Its function is as follows. Binds together with bS18 to 16S ribosomal RNA. The polypeptide is Small ribosomal subunit protein bS6 (Borrelia hermsii (strain HS1 / DAH)).